Consider the following 87-residue polypeptide: Kawaguchipeptin peptide (87 aa).

Positions 1 to 33 are excised as a propeptide; sequence MKNPTLLPKLTAPVERPAVTSSDLKQASSVDAA. W34 carries 3'-prenyl-2',N2-cyclotryptophan; partial lipidation. Positions 34 to 44 form a cross-link, cyclopeptide (Trp-Pro); sequence WLNGDNNWSTP. Residue L35 is modified to D-leucine; partial. A lipid anchor (3'-prenyl-2',N2-cyclotryptophan; partial) is attached at W41. Positions 45–51 are excised as a propeptide; sequence FAGVNAA. W52 is lipidated: 3'-prenyl-2',N2-cyclotryptophan; partial. The cyclopeptide (Trp-Pro) cross-link spans 52-62; it reads WLNGDNNWSTP. L53 carries the post-translational modification D-leucine; partial. The 3'-prenyl-2',N2-cyclotryptophan; partial moiety is linked to residue W59. Positions 63 to 69 are excised as a propeptide; it reads FAGVNAA. Residue W70 is the site of 3'-prenyl-2',N2-cyclotryptophan; partial attachment. Residues 70-80 constitute a cross-link (cyclopeptide (Trp-Pro)); that stretch reads WLNGDNNWSTP. At L71 the chain carries D-leucine; partial. Residue W77 is the site of 3'-prenyl-2',N2-cyclotryptophan; partial attachment. A propeptide spanning residues 81 to 87 is cleaved from the precursor; the sequence is FAADGAE.

Post-translationally, kawaguchipeptin A contains a D-Leu and 2 prenylated Trp, whereas kawaguchipeptin B only contains unmodified amino acids. In terms of processing, kawaguchipeptin A is prenylated in vivo. Upon expression in E.coli of the whole operon, Trp residues are prenylated by C-prenyltransferase KgpF. Prenylation by KgpF is likely the last enzymatic step in the biosynthetic maturation of kawaguchipeptin A.

Its function is as follows. Both kawaguchipeptin A and B, which only differ by post-translational modifications, have antibacterial activities, since they inhibit the growth of the Gram-positive bacterium S.aureus at a concentration of 1 ug/mL. This is Kawaguchipeptin peptide from Microcystis aeruginosa (strain NIES-88 / KW-MA1-3).